The following is a 261-amino-acid chain: Carbonic anhydrase 1 (261 aa).

Residue Ala2 is modified to N-acetylalanine. The Alpha-carbonic anhydrase domain occupies 4–261 (PDWGYDGENG…LKGRTVKASF (258 aa)). The disordered stretch occupies residues 22-41 (PIANGNNQSPIDIKTSETKR). His65 functions as the Proton donor/acceptor in the catalytic mechanism. Residues His95, His97, and His120 each coordinate Zn(2+). Substrate is bound by residues Thr200 and 200–201 (TH).

The protein belongs to the alpha-carbonic anhydrase family. The cofactor is Zn(2+).

The protein resides in the cytoplasm. It catalyses the reaction hydrogencarbonate + H(+) = CO2 + H2O. The enzyme catalyses urea = cyanamide + H2O. Inhibited by acetazolamide. Its function is as follows. Catalyzes the reversible hydration of carbon dioxide. Can hydrate cyanamide to urea. This is Carbonic anhydrase 1 (CA1) from Ovis aries (Sheep).